The following is a 248-amino-acid chain: Adenosylcobinamide-GDP ribazoletransferase (248 aa).

Helical transmembrane passes span 24 to 44 (EINL…IGAW), 70 to 90 (IIIT…GLFS), 106 to 126 (VGAN…ALFL), 134 to 154 (IGWL…LLFA), 168 to 188 (IFLG…LVAL), 189 to 209 (GAFF…FTII), and 228 to 248 (AGGQ…WGLI).

Belongs to the CobS family. The cofactor is Mg(2+).

It is found in the cell membrane. It carries out the reaction alpha-ribazole + adenosylcob(III)inamide-GDP = adenosylcob(III)alamin + GMP + H(+). The catalysed reaction is alpha-ribazole 5'-phosphate + adenosylcob(III)inamide-GDP = adenosylcob(III)alamin 5'-phosphate + GMP + H(+). It functions in the pathway cofactor biosynthesis; adenosylcobalamin biosynthesis; adenosylcobalamin from cob(II)yrinate a,c-diamide: step 7/7. Functionally, joins adenosylcobinamide-GDP and alpha-ribazole to generate adenosylcobalamin (Ado-cobalamin). Also synthesizes adenosylcobalamin 5'-phosphate from adenosylcobinamide-GDP and alpha-ribazole 5'-phosphate. In Listeria monocytogenes serotype 4a (strain HCC23), this protein is Adenosylcobinamide-GDP ribazoletransferase.